A 1330-amino-acid chain; its full sequence is ABC multidrug transporter mdr4 (1330 aa).

N-linked (GlcNAc...) asparagine glycosylation occurs at N3. Helical transmembrane passes span 90–110 (VLLIIGGLLFAICAGIPFPLL), 144–164 (VLYVIYITIANFCFIYAHSTC), 218–238 (KVGLVISTLSYFVAAYVVAFI), 243–263 (IAGMLVSVVPCFFLMALGGGH), 324–344 (HAAQLGCLYFIAYSANALAFW), and 370–390 (IFVLIDASFILSQVAPFIHVF). In terms of domain architecture, ABC transmembrane type-1 1 spans 94–392 (IGGLLFAICA…VAPFIHVFAS (299 aa)). The ABC transporter 1 domain occupies 428 to 666 (IRFRDVHFKY…GGVYAEMVRL (239 aa)). An ATP-binding site is contributed by 463-470 (GPSGGGKS). N707 carries N-linked (GlcNAc...) asparagine glycosylation. Residues 717–736 (VADTPSDSRDGSEEEARKKR) are disordered. The segment covering 722–733 (SDSRDGSEEEAR) has biased composition (basic and acidic residues). Helical transmembrane passes span 761 to 781 (LLGLAMSVIIGGSYSAEAIVF), 806 to 826 (LLFFILALVEFGANVVGGCAF), 871 to 893 (ASALGGITGTTIGLLLATAVNLI), 903 to 923 (AWKITIVLFPTIPVLLVSGMM), 989 to 1009 (AWLALAFSISNLVYALAYWWG), and 1023 to 1043 (FFIVMPALLFSTQSCGQMFAL). In terms of domain architecture, ABC transmembrane type-1 2 spans 761 to 1049 (LLGLAMSVII…MFALAPDISK (289 aa)). The ABC transporter 2 domain occupies 1086–1325 (AQLRDVHFTY…SETYRTSVIH (240 aa)). 1121–1128 (GPSGSGKS) contributes to the ATP binding site.

Belongs to the ABC transporter superfamily. ABCB family. Multidrug resistance exporter (TC 3.A.1.201) subfamily.

Its subcellular location is the cell membrane. It carries out the reaction itraconazole(in) + ATP + H2O = itraconazole(out) + ADP + phosphate + H(+). The catalysed reaction is voriconazole(in) + ATP + H2O = voriconazole(out) + ADP + phosphate + H(+). Pleiotropic ABC efflux transporter that confers resistance to azoles such as itraconazole and voriconazole. The protein is ABC multidrug transporter mdr4 of Aspergillus fumigatus (strain ATCC MYA-4609 / CBS 101355 / FGSC A1100 / Af293) (Neosartorya fumigata).